A 244-amino-acid polypeptide reads, in one-letter code: Sortase B (244 aa).

At 1–6 (MRMKRF) the chain is on the cytoplasmic side. The chain crosses the membrane as a helical span at residues 7–24 (LTIVQILLVVIIIIFGYK). Residues 25-244 (IVQTYIEDKQ…VVVAKIIKVS (220 aa)) are Extracellular-facing. Cys-223 acts as the Acyl-thioester intermediate in catalysis.

This sequence belongs to the bacterial sortase family. Class B subfamily.

The protein localises to the cell membrane. The enzyme catalyses The enzyme catalyzes a cell wall sorting reaction in which a surface protein with a sorting signal containing a NPXTN motif is cleaved between the Thr and Asn residue. The resulting threonine carboxyl end of the protein is covalently attached to a pentaglycine cross-bridge of peptidoglycan.. Its activity is regulated as follows. Inhibited by MTSET (2-(Trimethylammonium)-ethyl-methanethiosulfonate) and E64 ([n- (l-3-trans-carboxyoxirane-2-carbonyl)-l-leucyl]-amido(4-guanido)butane). Inhibited by coptisine. Transpeptidase that anchors surface proteins to the cell wall. Recognizes and modifies its substrate by proteolytic cleavage of a C-terminal sorting signal. Following cleavage, a covalent intermediate is formed via a thioester bond between the sortase and its substrate, which is then transferred and covalently attached to the cell wall. This sortase recognizes an Asn-Pro-Gln-Thr-Asn (NPQTN) motif in IsdC, which is cleaved by the sortase between the threonine and aspargine residues; may only have 1 substrate in this bacterium. May be dedicated to the process of iron acquisition during bacterial infection. This Staphylococcus aureus (strain NCTC 8325 / PS 47) protein is Sortase B.